The following is an 832-amino-acid chain: Protein P (832 aa).

A terminal protein domain (TP) region spans residues 1-177 (MPLSYQHFRR…FCGSPYSWEQ (177 aa)). The segment at 178–335 (DLQHGAESIH…YCLSLIVNLL (158 aa)) is spacer. Disordered regions lie at residues 186 to 218 (IHQQ…QSQQ) and 239 to 266 (TARR…SCLY). A polymerase/reverse transcriptase domain (RT) region spans residues 336-679 (EDWGPCDEYG…YLNLYPVARQ (344 aa)). A Reverse transcriptase domain is found at 346–589 (EHHIRIPRTP…YSLHFMGYVI (244 aa)). Positions 418, 540, and 541 each coordinate Mg(2+).

It belongs to the hepadnaviridae P protein family.

The catalysed reaction is DNA(n) + a 2'-deoxyribonucleoside 5'-triphosphate = DNA(n+1) + diphosphate. It carries out the reaction Endonucleolytic cleavage to 5'-phosphomonoester.. With respect to regulation, activated by host HSP70 and HSP40 in vitro to be able to bind the epsilon loop of the pgRNA. Because deletion of the RNase H region renders the protein partly chaperone-independent, the chaperones may be needed indirectly to relieve occlusion of the RNA-binding site by this domain. Inhibited by several reverse-transcriptase inhibitors: Lamivudine, Adefovir and Entecavir. Functionally, multifunctional enzyme that converts the viral RNA genome into dsDNA in viral cytoplasmic capsids. This enzyme displays a DNA polymerase activity that can copy either DNA or RNA templates, and a ribonuclease H (RNase H) activity that cleaves the RNA strand of RNA-DNA heteroduplexes in a partially processive 3'- to 5'-endonucleasic mode. Neo-synthesized pregenomic RNA (pgRNA) are encapsidated together with the P protein, and reverse-transcribed inside the nucleocapsid. Initiation of reverse-transcription occurs first by binding the epsilon loop on the pgRNA genome, and is initiated by protein priming, thereby the 5'-end of (-)DNA is covalently linked to P protein. Partial (+)DNA is synthesized from the (-)DNA template and generates the relaxed circular DNA (RC-DNA) genome. After budding and infection, the RC-DNA migrates in the nucleus, and is converted into a plasmid-like covalently closed circular DNA (cccDNA). The activity of P protein does not seem to be necessary for cccDNA generation, and is presumably released from (+)DNA by host nuclear DNA repair machinery. This Homo sapiens (Human) protein is Protein P.